A 187-amino-acid polypeptide reads, in one-letter code: MSYYTLWVIAFGLSMDAFAVSVGKGLTLADFCWKFTLKIALCFGLFQACMPLLGYYVGSHFSDYISEFDHWIAFALLCVIGINMIKMSVTNENSDDDPSDFSLRHLTMLGVATSIDALAMGVSFAFLKVNIWTAAAIIGITTTILSLFGVKAGHWLGDRIHKQAELLGGIILIAMGVKVLIEHRVFG.

A run of 6 helical transmembrane segments spans residues Tyr3–Gly23, Ile39–Ser59, Ile65–Ile85, Leu106–Phe126, Val129–Gly149, and Leu166–Phe186.

The protein belongs to the MntP (TC 9.B.29) family.

It localises to the cell inner membrane. Its function is as follows. Probably functions as a manganese efflux pump. This Actinobacillus succinogenes (strain ATCC 55618 / DSM 22257 / CCUG 43843 / 130Z) protein is Putative manganese efflux pump MntP.